We begin with the raw amino-acid sequence, 152 residues long: Large ribosomal subunit protein uL22 (152 aa).

The protein belongs to the universal ribosomal protein uL22 family. As to quaternary structure, part of the 50S ribosomal subunit.

In terms of biological role, this protein binds specifically to 23S rRNA. It makes multiple contacts with different domains of the 23S rRNA in the assembled 50S subunit and ribosome. Functionally, the globular domain of the protein is located near the polypeptide exit tunnel on the outside of the subunit, while an extended beta-hairpin is found that lines the wall of the exit tunnel in the center of the 70S ribosome. The sequence is that of Large ribosomal subunit protein uL22 from Nitrosopumilus maritimus (strain SCM1).